The primary structure comprises 560 residues: Serine palmitoyltransferase 2 (560 aa).

The helical transmembrane segment at Pro65–Leu85 threads the bilayer. Lys377 is modified (N6-(pyridoxal phosphate)lysine).

Belongs to the class-II pyridoxal-phosphate-dependent aminotransferase family. Component of the serine palmitoyltransferase (SPT) complex, which is composed of SPTLC1, SPTLC2 or SPTLC3 and SPTSSA or SPTSSB. The heterodimer consisting of SPTLC1 and SPTLC2/SPTLC3 forms the catalytic core of the enzyme, while SPTSSA or SPTSSB subunits determine substrate specificity. SPT also interacts with ORMDL proteins, especially ORMDL3, which negatively regulate SPT activity in the presence of ceramides. Forms dimers of heterodimers with SPTLC1. It depends on pyridoxal 5'-phosphate as a cofactor. As to expression, expressed in a variety of tissues. Expressed in brains cortices (at protein level). Expressed in brown and white adipose tissues. Expressed in liver.

The protein localises to the endoplasmic reticulum membrane. The enzyme catalyses L-serine + hexadecanoyl-CoA + H(+) = 3-oxosphinganine + CO2 + CoA. It catalyses the reaction octadecanoyl-CoA + L-serine + H(+) = 3-oxoeicosasphinganine + CO2 + CoA. It functions in the pathway lipid metabolism; sphingolipid metabolism. SPT complex catalytic activity is negatively regulated by ORMDL proteins, including ORMDL3, in the presence of ceramides. This mechanism allows to maintain ceramide levels at sufficient concentrations for the production of complex sphingolipids, but which prevents the accumulation of ceramides to levels that trigger apoptosis. Component of the serine palmitoyltransferase multisubunit enzyme (SPT) that catalyzes the initial and rate-limiting step in sphingolipid biosynthesis by condensing L-serine and activated acyl-CoA (most commonly palmitoyl-CoA) to form long-chain bases. The SPT complex is composed of SPTLC1, SPTLC2 or SPTLC3 and SPTSSA or SPTSSB. Within this complex, the heterodimer consisting of SPTLC1 and SPTLC2/SPTLC3 forms the catalytic core. The composition of the serine palmitoyltransferase (SPT) complex determines the substrate preference. The SPTLC1-SPTLC2-SPTSSA complex shows a strong preference for C16-CoA substrate, while the SPTLC1-SPTLC3-SPTSSA isozyme uses both C14-CoA and C16-CoA as substrates, with a slight preference for C14-CoA. The SPTLC1-SPTLC2-SPTSSB complex shows a strong preference for C18-CoA substrate, while the SPTLC1-SPTLC3-SPTSSB isozyme displays an ability to use a broader range of acyl-CoAs, without apparent preference. Crucial for adipogenesis. The sequence is that of Serine palmitoyltransferase 2 from Mus musculus (Mouse).